A 576-amino-acid polypeptide reads, in one-letter code: Arginine--tRNA ligase (576 aa).

The 'HIGH' region motif lies at 126–136 (ANPTGPMHIGH).

The protein belongs to the class-I aminoacyl-tRNA synthetase family. As to quaternary structure, monomer.

The protein resides in the cytoplasm. It catalyses the reaction tRNA(Arg) + L-arginine + ATP = L-arginyl-tRNA(Arg) + AMP + diphosphate. This Rickettsia prowazekii (strain Madrid E) protein is Arginine--tRNA ligase (argS).